Reading from the N-terminus, the 359-residue chain is Protein disulfide-isomerase C17H9.14c (359 aa).

Positions 1–19 (MRLPLLSFVIFALFALVFA) are cleaved as a signal peptide. Thioredoxin domains follow at residues 20–130 (SGVV…EKTG) and 134–250 (RKIV…KKSG). Residues cysteine 51 and cysteine 54 each act as nucleophile in the active site. Cystine bridges form between cysteine 51–cysteine 54 and cysteine 170–cysteine 173.

It belongs to the protein disulfide isomerase family.

The catalysed reaction is Catalyzes the rearrangement of -S-S- bonds in proteins.. Participates in the folding of proteins containing disulfide bonds, may be involved in glycosylation, prolyl hydroxylation and triglyceride transfer. The chain is Protein disulfide-isomerase C17H9.14c from Schizosaccharomyces pombe (strain 972 / ATCC 24843) (Fission yeast).